An 874-amino-acid chain; its full sequence is Alanine--tRNA ligase (874 aa).

The Zn(2+) site is built by histidine 563, histidine 567, cysteine 665, and histidine 669.

It belongs to the class-II aminoacyl-tRNA synthetase family. It depends on Zn(2+) as a cofactor.

The protein resides in the cytoplasm. It catalyses the reaction tRNA(Ala) + L-alanine + ATP = L-alanyl-tRNA(Ala) + AMP + diphosphate. Functionally, catalyzes the attachment of alanine to tRNA(Ala) in a two-step reaction: alanine is first activated by ATP to form Ala-AMP and then transferred to the acceptor end of tRNA(Ala). Also edits incorrectly charged Ser-tRNA(Ala) and Gly-tRNA(Ala) via its editing domain. The protein is Alanine--tRNA ligase of Actinobacillus pleuropneumoniae serotype 5b (strain L20).